Here is a 406-residue protein sequence, read N- to C-terminus: E3 ubiquitin-protein ligase RING1 (406 aa).

Residue threonine 24 is modified to Phosphothreonine. Positions 30-234 (MDGTEIAVSP…GGAGSEDSGD (205 aa)) are necessary for transcriptional repression. Serine 38 is modified (phosphoserine). The RING-type zinc-finger motif lies at 48–88 (CPICLDMLKNTMTTKECLHRFCSDCIVTALRSGNKECPTCR). Phosphoserine occurs at positions 140, 187, and 190. 2 disordered regions span residues 151–263 (HRAQ…GEIE) and 309–354 (QQQE…PSLE). A compositionally biased stretch (acidic residues) spans 175-187 (EPGEGEGDGEDVS). The Nuclear localization signal signature appears at 201 to 204 (KRPR). A compositionally biased stretch (gly residues) spans 214 to 228 (GTGGGAAGGACGGAG). At threonine 215 the chain carries Phosphothreonine. Serine 229 and serine 232 each carry phosphoserine. The segment at 230-406 (EDSGDRGGTL…LCYAPTKDPK (177 aa)) is necessary for interaction with CBX2. A compositionally biased stretch (gly residues) spans 235 to 244 (RGGTLGGGTL). Positions 246 to 258 (PPSPPGAPSPPEP) are enriched in pro residues. 2 positions are modified to phosphoserine: serine 248 and serine 254. Over residues 317 to 343 (GGPGGGASDTGGPDGGGGERGVAGGGE) the composition is skewed to gly residues.

As to quaternary structure, component of chromatin-associated Polycomb (PcG) complexes. Part of the E2F6.com-1 complex in G0 phase composed of E2F6, MGA, MAX, TFDP1, CBX3, BAT8, EUHMTASE1, RING1, RNF2/RING2 MBLR, L3MBTL2 and YAF2. Interacts with CBX2 and PCGF6. Component of a PRC1-like complex. Component of repressive BCOR complex containing Polycomb group subcomplex at least composed of RYBP, PCGF1, BCOR and RNF2/RING2. Interacts with PHC2, PCGF2, RNF2; CBX6, CBX7 and CBX8. Interacts with BMI1. Interacts with MN1. Interacts with USP26.

The protein localises to the nucleus speckle. It carries out the reaction S-ubiquitinyl-[E2 ubiquitin-conjugating enzyme]-L-cysteine + [acceptor protein]-L-lysine = [E2 ubiquitin-conjugating enzyme]-L-cysteine + N(6)-ubiquitinyl-[acceptor protein]-L-lysine.. It participates in protein modification; protein ubiquitination. In terms of biological role, constitutes one of the E3 ubiquitin-protein ligases that mediate monoubiquitination of 'Lys-119' of histone H2A, thereby playing a central role in histone code and gene regulation. H2A 'Lys-119' ubiquitination gives a specific tag for epigenetic transcriptional repression and participates in X chromosome inactivation of female mammals. Essential component of a Polycomb group (PcG) multiprotein PRC1-like complex, a complex class required to maintain the transcriptionally repressive state of many genes, including Hox genes, throughout development. PcG PRC1 complex acts via chromatin remodeling and modification of histones, rendering chromatin heritably changed in its expressibility. Compared to RNF2/RING2, it does not have the main E3 ubiquitin ligase activity on histone H2A, and it may rather act as a modulator of RNF2/RING2 activity. The polypeptide is E3 ubiquitin-protein ligase RING1 (Mus musculus (Mouse)).